The chain runs to 409 residues: Tryptophan synthase beta chain (409 aa).

The residue at position 86 (K86) is an N6-(pyridoxal phosphate)lysine.

This sequence belongs to the TrpB family. As to quaternary structure, tetramer of two alpha and two beta chains. The cofactor is pyridoxal 5'-phosphate.

It catalyses the reaction (1S,2R)-1-C-(indol-3-yl)glycerol 3-phosphate + L-serine = D-glyceraldehyde 3-phosphate + L-tryptophan + H2O. Its pathway is amino-acid biosynthesis; L-tryptophan biosynthesis; L-tryptophan from chorismate: step 5/5. In terms of biological role, the beta subunit is responsible for the synthesis of L-tryptophan from indole and L-serine. The protein is Tryptophan synthase beta chain of Shewanella pealeana (strain ATCC 700345 / ANG-SQ1).